The primary structure comprises 458 residues: Exodeoxyribonuclease 7 large subunit (458 aa).

Belongs to the XseA family. As to quaternary structure, heterooligomer composed of large and small subunits.

The protein localises to the cytoplasm. It catalyses the reaction Exonucleolytic cleavage in either 5'- to 3'- or 3'- to 5'-direction to yield nucleoside 5'-phosphates.. In terms of biological role, bidirectionally degrades single-stranded DNA into large acid-insoluble oligonucleotides, which are then degraded further into small acid-soluble oligonucleotides. This is Exodeoxyribonuclease 7 large subunit from Stutzerimonas stutzeri (strain A1501) (Pseudomonas stutzeri).